A 69-amino-acid chain; its full sequence is Putative membrane protein insertion efficiency factor (69 aa).

Belongs to the UPF0161 family.

Its subcellular location is the cell inner membrane. Could be involved in insertion of integral membrane proteins into the membrane. This chain is Putative membrane protein insertion efficiency factor, found in Aromatoleum aromaticum (strain DSM 19018 / LMG 30748 / EbN1) (Azoarcus sp. (strain EbN1)).